We begin with the raw amino-acid sequence, 208 residues long: MNVELFKKFSEKVEEIIEAGRILHSRGWVPATSGNISAKVSEEYIAITASGKHKGKLTPEDILLIDYEGRPVGGGKPSAETLLHTTVYKLFPEVNAVVHTHSPNATVISIVEKKDFVELEDYELLKAFPDIHTHEVKIKIPIFPNEQNIPLLAKEVENYFKTSEDKYGFLIRGHGLYTWGRSMEEALIHTEALEFIFECELKLLSFHS.

The Zn(2+) site is built by His99 and His101.

The protein belongs to the aldolase class II family. MtnB subfamily. Zn(2+) serves as cofactor.

The enzyme catalyses 5-(methylsulfanyl)-D-ribulose 1-phosphate = 5-methylsulfanyl-2,3-dioxopentyl phosphate + H2O. It functions in the pathway amino-acid biosynthesis; L-methionine biosynthesis via salvage pathway; L-methionine from S-methyl-5-thio-alpha-D-ribose 1-phosphate: step 2/6. In terms of biological role, catalyzes the dehydration of methylthioribulose-1-phosphate (MTRu-1-P) into 2,3-diketo-5-methylthiopentyl-1-phosphate (DK-MTP-1-P). The polypeptide is Methylthioribulose-1-phosphate dehydratase (Aquifex aeolicus (strain VF5)).